Reading from the N-terminus, the 124-residue chain is Apolipoprotein C-IV (124 aa).

The first 27 residues, 1–27 (MSLLRCRQQTLPSLCLSVLFLACFVAS), serve as a signal peptide directing secretion.

This sequence belongs to the apolipoprotein C4 family.

The protein resides in the secreted. Functionally, may participate in lipoprotein metabolism. The chain is Apolipoprotein C-IV (Apoc4) from Rattus norvegicus (Rat).